Consider the following 266-residue polypeptide: GTP cyclohydrolase FolE2 (266 aa).

The protein belongs to the GTP cyclohydrolase IV family.

The enzyme catalyses GTP + H2O = 7,8-dihydroneopterin 3'-triphosphate + formate + H(+). Its pathway is cofactor biosynthesis; 7,8-dihydroneopterin triphosphate biosynthesis; 7,8-dihydroneopterin triphosphate from GTP: step 1/1. Functionally, converts GTP to 7,8-dihydroneopterin triphosphate. The chain is GTP cyclohydrolase FolE2 from Methylobacillus flagellatus (strain ATCC 51484 / DSM 6875 / VKM B-1610 / KT).